We begin with the raw amino-acid sequence, 249 residues long: Cytochrome c oxidase subunit 2 (249 aa).

An N-terminal signal peptide occupies residues 1–13 (MLNLFQIMNMINN). The Mitochondrial intermembrane portion of the chain corresponds to 14–40 (DVPTPYGFYFQDSATPNQEGILELHDN). Residues 41–62 (IMFYLVVILGLVSWMLFTIVRT) form a helical membrane-spanning segment. At 63-80 (YSRNPMAYKYIKHGQTIE) the chain is on the mitochondrial matrix side. A helical membrane pass occupies residues 81–105 (IIWKIFPAVILLTIAFPSFILLYLC). Residues 106–249 (DEVISPAMTI…PKFLEWLNEQ (144 aa)) lie on the Mitochondrial intermembrane side of the membrane. The Cu cation site is built by histidine 184, cysteine 219, glutamate 221, cysteine 223, histidine 227, and methionine 230. Glutamate 221 serves as a coordination point for Mg(2+).

The protein belongs to the cytochrome c oxidase subunit 2 family. In terms of assembly, component of the cytochrome c oxidase (complex IV, CIV), a multisubunit enzyme composed of a catalytic core of 3 subunits and several supernumerary subunits. The complex exists as a monomer or a dimer and forms supercomplexes (SCs) in the inner mitochondrial membrane with ubiquinol-cytochrome c oxidoreductase (cytochrome b-c1 complex, complex III, CIII). The cofactor is Cu cation. The signal sequence of COX2 is processed by IMP1.

Its subcellular location is the mitochondrion inner membrane. It catalyses the reaction 4 Fe(II)-[cytochrome c] + O2 + 8 H(+)(in) = 4 Fe(III)-[cytochrome c] + 2 H2O + 4 H(+)(out). Functionally, component of the cytochrome c oxidase, the last enzyme in the mitochondrial electron transport chain which drives oxidative phosphorylation. The respiratory chain contains 3 multisubunit complexes succinate dehydrogenase (complex II, CII), ubiquinol-cytochrome c oxidoreductase (cytochrome b-c1 complex, complex III, CIII) and cytochrome c oxidase (complex IV, CIV), that cooperate to transfer electrons derived from NADH and succinate to molecular oxygen, creating an electrochemical gradient over the inner membrane that drives transmembrane transport and the ATP synthase. Cytochrome c oxidase is the component of the respiratory chain that catalyzes the reduction of oxygen to water. Electrons originating from reduced cytochrome c in the intermembrane space (IMS) are transferred via the dinuclear copper A center (CU(A)) of subunit 2 and heme A of subunit 1 to the active site in subunit 1, a binuclear center (BNC) formed by heme A3 and copper B (CU(B)). The BNC reduces molecular oxygen to 2 water molecules using 4 electrons from cytochrome c in the IMS and 4 protons from the mitochondrial matrix. In Maudiozyma exigua (Yeast), this protein is Cytochrome c oxidase subunit 2 (COX2).